The primary structure comprises 398 residues: Arylacetamide deacetylase (398 aa).

Topologically, residues 1 to 5 are cytoplasmic; the sequence is MGKTI. A helical; Signal-anchor for type II membrane protein membrane pass occupies residues 6–26; it reads SLLISVVLVAYYLYIPLPDAI. Over 27–398 the chain is Lumenal; that stretch reads EEPWKVVWET…QYLSWLIKNL (372 aa). The short motif at 110-112 is the Involved in the stabilization of the negatively charged intermediate by the formation of the oxyanion hole element; that stretch reads HGG. Cysteine 115 and cysteine 339 are oxidised to a cystine. Serine 188 is an active-site residue. An N-linked (GlcNAc...) asparagine glycan is attached at asparagine 281. Residues aspartate 342 and histidine 372 contribute to the active site.

The protein belongs to the 'GDXG' lipolytic enzyme family. N-glycosylated. As to expression, highest levels in liver with lower levels in jejunum and kidney.

It is found in the endoplasmic reticulum membrane. It localises to the microsome membrane. The enzyme catalyses a triacylglycerol + H2O = a diacylglycerol + a fatty acid + H(+). Functionally, displays cellular triglyceride lipase activity in liver, increases the levels of intracellular fatty acids derived from the hydrolysis of newly formed triglyceride stores and plays a role in very low-density lipoprotein assembly. Displays serine esterase activity in liver. Deacetylates a variety of arylacetamide substrates, including xenobiotic compounds and procarcinogens, converting them to the primary arylamide compounds and increasing their toxicity. The protein is Arylacetamide deacetylase (Aadac) of Mus musculus (Mouse).